The chain runs to 200 residues: Peptidyl-tRNA hydrolase (200 aa).

Phenylalanine 16 provides a ligand contact to tRNA. Histidine 21 acts as the Proton acceptor in catalysis. Positions 67, 69, and 115 each coordinate tRNA.

This sequence belongs to the PTH family. In terms of assembly, monomer.

The protein localises to the cytoplasm. It catalyses the reaction an N-acyl-L-alpha-aminoacyl-tRNA + H2O = an N-acyl-L-amino acid + a tRNA + H(+). In terms of biological role, hydrolyzes ribosome-free peptidyl-tRNAs (with 1 or more amino acids incorporated), which drop off the ribosome during protein synthesis, or as a result of ribosome stalling. Catalyzes the release of premature peptidyl moieties from peptidyl-tRNA molecules trapped in stalled 50S ribosomal subunits, and thus maintains levels of free tRNAs and 50S ribosomes. In Prochlorococcus marinus (strain MIT 9215), this protein is Peptidyl-tRNA hydrolase.